The following is a 109-amino-acid chain: Nucleoid-associated protein BU482 (109 aa).

This sequence belongs to the YbaB/EbfC family. In terms of assembly, homodimer.

It is found in the cytoplasm. Its subcellular location is the nucleoid. Functionally, binds to DNA and alters its conformation. May be involved in regulation of gene expression, nucleoid organization and DNA protection. This chain is Nucleoid-associated protein BU482, found in Buchnera aphidicola subsp. Acyrthosiphon pisum (strain APS) (Acyrthosiphon pisum symbiotic bacterium).